Reading from the N-terminus, the 258-residue chain is Ribonuclease PH (258 aa).

Residues Arg-86 and 124–126 (GTR) contribute to the phosphate site.

Belongs to the RNase PH family. Homohexameric ring arranged as a trimer of dimers.

It catalyses the reaction tRNA(n+1) + phosphate = tRNA(n) + a ribonucleoside 5'-diphosphate. Phosphorolytic 3'-5' exoribonuclease that plays an important role in tRNA 3'-end maturation. Removes nucleotide residues following the 3'-CCA terminus of tRNAs; can also add nucleotides to the ends of RNA molecules by using nucleoside diphosphates as substrates, but this may not be physiologically important. Probably plays a role in initiation of 16S rRNA degradation (leading to ribosome degradation) during starvation. The polypeptide is Ribonuclease PH (Caldicellulosiruptor saccharolyticus (strain ATCC 43494 / DSM 8903 / Tp8T 6331)).